The primary structure comprises 568 residues: Urease subunit alpha (568 aa).

The Urease domain maps to 133-568; that stretch reads GGLDIHIHFN…ELPLAQRYLL (436 aa). The Ni(2+) site is built by histidine 138, histidine 140, and lysine 217. Lysine 217 carries the N6-carboxylysine modification. Histidine 219 provides a ligand contact to substrate. Positions 246 and 272 each coordinate Ni(2+). Histidine 320 acts as the Proton donor in catalysis. Aspartate 360 lines the Ni(2+) pocket.

The protein belongs to the metallo-dependent hydrolases superfamily. Urease alpha subunit family. Heterotrimer of UreA (gamma), UreB (beta) and UreC (alpha) subunits. Three heterotrimers associate to form the active enzyme. It depends on Ni cation as a cofactor. Post-translationally, carboxylation allows a single lysine to coordinate two nickel ions.

The protein resides in the cytoplasm. The catalysed reaction is urea + 2 H2O + H(+) = hydrogencarbonate + 2 NH4(+). It functions in the pathway nitrogen metabolism; urea degradation; CO(2) and NH(3) from urea (urease route): step 1/1. The protein is Urease subunit alpha of Haloarcula marismortui (strain ATCC 43049 / DSM 3752 / JCM 8966 / VKM B-1809) (Halobacterium marismortui).